The sequence spans 392 residues: Heat-inducible transcription repressor HrcA (392 aa).

It belongs to the HrcA family.

Functionally, negative regulator of class I heat shock genes (grpE-dnaK-dnaJ and groELS operons). Prevents heat-shock induction of these operons. In Chlamydia muridarum (strain MoPn / Nigg), this protein is Heat-inducible transcription repressor HrcA.